A 374-amino-acid chain; its full sequence is Mitochondrial inner membrane protein oxa1-1 (374 aa).

A helical transmembrane segment spans residues 77 to 97; that stretch reads TINVYAGAPWWVSIILTTLGV. Residues 98 to 159 are Mitochondrial intermembrane-facing; it reads RLALTPVMIA…GIYLKHNVNP (62 aa). A helical transmembrane segment spans residues 160–180; the sequence is FAIFILPLTQSAVFFSFFYAI. Residues 181 to 242 are Mitochondrial matrix-facing; it reads RKMSRLSVDG…TIGNSTNWRT (62 aa). Residues 243–263 traverse the membrane as a helical segment; sequence FFFLCCLLSPLLTAKLPAAIF. The Mitochondrial intermembrane portion of the chain corresponds to 264–374; the sequence is MYWIPSSLFN…SKKNSKKQSN (111 aa).

Belongs to the OXA1/ALB3/YidC family.

It localises to the mitochondrion inner membrane. In terms of biological role, required for the insertion of integral membrane proteins into the mitochondrial inner membrane. Essential for the activity and assembly of cytochrome c oxidase. Not essential for viability, while oxa102 is essential. When both genes are deleted the cell is non-viable, suggesting that oxa101 act as a back-up for oxa102. This is Mitochondrial inner membrane protein oxa1-1 (oxa101) from Schizosaccharomyces pombe (strain 972 / ATCC 24843) (Fission yeast).